A 182-amino-acid polypeptide reads, in one-letter code: Adenine phosphoribosyltransferase (182 aa).

Belongs to the purine/pyrimidine phosphoribosyltransferase family. As to quaternary structure, homodimer.

The protein resides in the cytoplasm. It catalyses the reaction AMP + diphosphate = 5-phospho-alpha-D-ribose 1-diphosphate + adenine. Its pathway is purine metabolism; AMP biosynthesis via salvage pathway; AMP from adenine: step 1/1. Functionally, catalyzes a salvage reaction resulting in the formation of AMP, that is energically less costly than de novo synthesis. The polypeptide is Adenine phosphoribosyltransferase (Streptomyces avermitilis (strain ATCC 31267 / DSM 46492 / JCM 5070 / NBRC 14893 / NCIMB 12804 / NRRL 8165 / MA-4680)).